The following is a 206-amino-acid chain: Large ribosomal subunit protein uL4 (206 aa).

A compositionally biased stretch (polar residues) spans 42-54 (RRQQGTHQSQGRS). Residues 42-93 (RRQQGTHQSQGRSDVSRTGAKMFKQKGTGRARHSSARAPQFRGGGKAHGPVV) are disordered. Residues 64-76 (FKQKGTGRARHSS) are compositionally biased toward basic residues.

Belongs to the universal ribosomal protein uL4 family. Part of the 50S ribosomal subunit.

Functionally, one of the primary rRNA binding proteins, this protein initially binds near the 5'-end of the 23S rRNA. It is important during the early stages of 50S assembly. It makes multiple contacts with different domains of the 23S rRNA in the assembled 50S subunit and ribosome. In terms of biological role, forms part of the polypeptide exit tunnel. This chain is Large ribosomal subunit protein uL4, found in Bartonella henselae (strain ATCC 49882 / DSM 28221 / CCUG 30454 / Houston 1) (Rochalimaea henselae).